The primary structure comprises 429 residues: Proton extrusion protein PxcA (429 aa).

The interval 139–161 (LNGPEAPQTNGDRPDNKPKVETV) is disordered. Residues 150 to 161 (DRPDNKPKVETV) are compositionally biased toward basic and acidic residues. 4 consecutive transmembrane segments (helical) span residues 211-231 (FLLT…IAIT), 306-326 (AYEN…ILLI), 353-373 (LIIL…WEII), and 389-409 (FNFL…KYWI).

Belongs to the CemA family.

Its subcellular location is the cell inner membrane. Functionally, required for H(+) efflux immediately after light irradiation to form a rapid H(+) concentration gradient across the thylakoid membranes. Together with PxcL, contributes to transient H(+) uptake following dark to light transition. The chain is Proton extrusion protein PxcA from Picosynechococcus sp. (strain ATCC 27264 / PCC 7002 / PR-6) (Agmenellum quadruplicatum).